Consider the following 105-residue polypeptide: MIKKSRTYYPSFGAYFHLLPAHPNAHSVTLLFGIFRSSPFLLLFLLIHRKVGEGRGSQRMKKKRGRANPSENLRERADPTNGPAENGKKGSVMCGCQLAVAMTTC.

The chain crosses the membrane as a helical span at residues 25–47; sequence AHSVTLLFGIFRSSPFLLLFLLI. A disordered region spans residues 54 to 89; that stretch reads GRGSQRMKKKRGRANPSENLRERADPTNGPAENGKK.

The protein resides in the membrane. This is an uncharacterized protein from Saccharomyces cerevisiae (strain ATCC 204508 / S288c) (Baker's yeast).